The sequence spans 199 residues: MIARLTGMLAHKSPDAIIIDVNGVGYRVQIPFSTYYELPDEGKTVSLSIYTHVKEDAISLFGFRTVAEKEFFQVLISVSGIGPKMARDILSNIQPDELAGAILQGNLVRLSSIPGIGKKTAERLVLELKEKVRKMDVAPSTKEAAPSEAPPEVADDVASALVNLGYKEAVVRKVLAEMAIESGASTEAVLRQALKILMK.

The domain I stretch occupies residues 1–64 (MIARLTGMLA…EDAISLFGFR (64 aa)). Residues 65–143 (TVAEKEFFQV…KMDVAPSTKE (79 aa)) are domain II. Residues 144 to 154 (AAPSEAPPEVA) are flexible linker. The tract at residues 154-199 (ADDVASALVNLGYKEAVVRKVLAEMAIESGASTEAVLRQALKILMK) is domain III.

It belongs to the RuvA family. Homotetramer. Forms an RuvA(8)-RuvB(12)-Holliday junction (HJ) complex. HJ DNA is sandwiched between 2 RuvA tetramers; dsDNA enters through RuvA and exits via RuvB. An RuvB hexamer assembles on each DNA strand where it exits the tetramer. Each RuvB hexamer is contacted by two RuvA subunits (via domain III) on 2 adjacent RuvB subunits; this complex drives branch migration. In the full resolvosome a probable DNA-RuvA(4)-RuvB(12)-RuvC(2) complex forms which resolves the HJ.

The protein localises to the cytoplasm. Its function is as follows. The RuvA-RuvB-RuvC complex processes Holliday junction (HJ) DNA during genetic recombination and DNA repair, while the RuvA-RuvB complex plays an important role in the rescue of blocked DNA replication forks via replication fork reversal (RFR). RuvA specifically binds to HJ cruciform DNA, conferring on it an open structure. The RuvB hexamer acts as an ATP-dependent pump, pulling dsDNA into and through the RuvAB complex. HJ branch migration allows RuvC to scan DNA until it finds its consensus sequence, where it cleaves and resolves the cruciform DNA. The polypeptide is Holliday junction branch migration complex subunit RuvA (Geobacter metallireducens (strain ATCC 53774 / DSM 7210 / GS-15)).